The sequence spans 243 residues: DNA repair protein RecO (243 aa).

Belongs to the RecO family.

In terms of biological role, involved in DNA repair and RecF pathway recombination. This is DNA repair protein RecO from Phenylobacterium zucineum (strain HLK1).